The chain runs to 822 residues: AP-1 complex subunit gamma-1 (822 aa).

Residues 593–604 (NGPSEIVQTNGE) are compositionally biased toward polar residues. The disordered stretch occupies residues 593–627 (NGPSEIVQTNGETEPAPLETKPPPSGPQPTSQAND). The region spanning 702–817 (PGIPSITAYS…QDLAEVNNFP (116 aa)) is the GAE domain.

It belongs to the adaptor complexes large subunit family. As to quaternary structure, adaptor protein complex 1 (AP-1) is a heterotetramer composed of two large adaptins (gamma-type subunit AP1G1 and beta-type subunit AP1B1), a medium adaptin (mu-type subunit AP1M1 or AP1M2) and a small adaptin (sigma-type subunit AP1S1 or AP1S2 or AP1S3). Interacts (via GAE domain) with RABEP1. Interacts with EPS15. Interacts with SYNRG/gamma-synergin. Interacts (via GAE domain) with AP1AR (via coiled-coil domain). Interacts with CLN3 (via dileucine motif); this interaction facilitates lysosomal targeting. Interacts (via GAE domain) with AFTPH/aftiphilin; the interaction is required to recruit AFTPH/aftiphilin to the perinuclear region of the cell. As to expression, widely expressed.

The protein resides in the golgi apparatus. Its subcellular location is the cytoplasmic vesicle. It is found in the clathrin-coated vesicle membrane. The protein localises to the cytoplasm. It localises to the perinuclear region. The protein resides in the clathrin-coated vesicle. Its subcellular location is the membrane. It is found in the clathrin-coated pit. Subunit of clathrin-associated adaptor protein complex 1 that plays a role in protein sorting in the late-Golgi/trans-Golgi network (TGN) and/or endosomes. The AP complexes mediate both the recruitment of clathrin to membranes and the recognition of sorting signals within the cytosolic tails of transmembrane cargo molecules. In association with AFTPH/aftiphilin in the aftiphilin/p200/gamma-synergin complex, involved in the trafficking of transferrin from early to recycling endosomes, and the membrane trafficking of furin and the lysosomal enzyme cathepsin D between the trans-Golgi network (TGN) and endosomes. The protein is AP-1 complex subunit gamma-1 (Ap1g1) of Mus musculus (Mouse).